Consider the following 225-residue polypeptide: Protein GrpE (225 aa).

Polar residues predominate over residues 1–15 (MSGDASTPEQDQNVV). 2 disordered regions span residues 1–48 (MSGD…DRMQ) and 198–225 (VSMG…AEEA). The segment covering 201-225 (GPGPSDPGSAPAEAAAAPDQTAEEA) has biased composition (low complexity).

It belongs to the GrpE family. Homodimer.

Its subcellular location is the cytoplasm. Functionally, participates actively in the response to hyperosmotic and heat shock by preventing the aggregation of stress-denatured proteins, in association with DnaK and GrpE. It is the nucleotide exchange factor for DnaK and may function as a thermosensor. Unfolded proteins bind initially to DnaJ; upon interaction with the DnaJ-bound protein, DnaK hydrolyzes its bound ATP, resulting in the formation of a stable complex. GrpE releases ADP from DnaK; ATP binding to DnaK triggers the release of the substrate protein, thus completing the reaction cycle. Several rounds of ATP-dependent interactions between DnaJ, DnaK and GrpE are required for fully efficient folding. The protein is Protein GrpE of Synechococcus sp. (strain CC9605).